The following is a 236-amino-acid chain: 5'-methylthioadenosine/S-adenosylhomocysteine nucleosidase (236 aa).

Glutamate 12 (proton acceptor) is an active-site residue. Substrate contacts are provided by residues glycine 78, isoleucine 153, and 174–175 (ME). The active-site Proton donor is the aspartate 198.

Belongs to the PNP/UDP phosphorylase family. MtnN subfamily.

The catalysed reaction is S-adenosyl-L-homocysteine + H2O = S-(5-deoxy-D-ribos-5-yl)-L-homocysteine + adenine. The enzyme catalyses S-methyl-5'-thioadenosine + H2O = 5-(methylsulfanyl)-D-ribose + adenine. It catalyses the reaction 5'-deoxyadenosine + H2O = 5-deoxy-D-ribose + adenine. It functions in the pathway amino-acid biosynthesis; L-methionine biosynthesis via salvage pathway; S-methyl-5-thio-alpha-D-ribose 1-phosphate from S-methyl-5'-thioadenosine (hydrolase route): step 1/2. In terms of biological role, catalyzes the irreversible cleavage of the glycosidic bond in both 5'-methylthioadenosine (MTA) and S-adenosylhomocysteine (SAH/AdoHcy) to adenine and the corresponding thioribose, 5'-methylthioribose and S-ribosylhomocysteine, respectively. Also cleaves 5'-deoxyadenosine, a toxic by-product of radical S-adenosylmethionine (SAM) enzymes, into 5-deoxyribose and adenine. The chain is 5'-methylthioadenosine/S-adenosylhomocysteine nucleosidase from Shewanella baltica (strain OS185).